The sequence spans 264 residues: ATP synthase subunit a (264 aa).

6 helical membrane-spanning segments follow: residues 29–49 (TWHIDSLLFSVGLGVLFLWLF), 89–109 (VIAPLALTIFVWVFMMNFMDM), 134–154 (DLNITFSMAIGVFLLIIYYSI), 177–197 (IPVNFLLETVTLIAKPISLAL), 208–228 (LIFILIALMYGANMALSALGV), and 235–255 (LIFHILVITLQAFIFMMLTIV).

The protein belongs to the ATPase A chain family. In terms of assembly, F-type ATPases have 2 components, CF(1) - the catalytic core - and CF(0) - the membrane proton channel. CF(1) has five subunits: alpha(3), beta(3), gamma(1), delta(1), epsilon(1). CF(0) has three main subunits: a(1), b(2) and c(9-12). The alpha and beta chains form an alternating ring which encloses part of the gamma chain. CF(1) is attached to CF(0) by a central stalk formed by the gamma and epsilon chains, while a peripheral stalk is formed by the delta and b chains.

The protein resides in the cell inner membrane. In terms of biological role, key component of the proton channel; it plays a direct role in the translocation of protons across the membrane. The chain is ATP synthase subunit a from Shewanella sediminis (strain HAW-EB3).